The chain runs to 139 residues: Cystatin-11 (139 aa).

The N-terminal stretch at 1 to 28 (MMARLWKTTWFLLAILVALVAFSYQVKR) is a signal peptide. Intrachain disulfides connect Cys-94–Cys-102 and Cys-115–Cys-135. Asn-134 carries an N-linked (GlcNAc...) asparagine glycan.

This sequence belongs to the cystatin family.

It localises to the secreted. In terms of biological role, has antibacterial activity against the Gram-negative bacteria E.coli. May play a role in sperm maturation and fertilization. This chain is Cystatin-11 (Cst11), found in Rattus norvegicus (Rat).